Here is a 483-residue protein sequence, read N- to C-terminus: Galactose-3-O-sulfotransferase 4 (483 aa).

The Cytoplasmic portion of the chain corresponds to 1–18 (MGVLSPTRTMRLWGPRSL). Residues 19 to 39 (GVALGVFMTIGFALQLLGGPF) traverse the membrane as a helical; Signal-anchor for type II membrane protein segment. The Lumenal portion of the chain corresponds to 40-483 (QRRLPGLQLR…PLKTSRRPSP (444 aa)). Residues 225–248 (KRGNPHVSRDPNPPQLPSGAGPPA) are disordered. N-linked (GlcNAc...) asparagine glycosylation is present at Asn-371.

It belongs to the galactose-3-O-sulfotransferase family. Mn(2+) serves as cofactor.

The protein resides in the golgi apparatus. The protein localises to the golgi stack membrane. It functions in the pathway protein modification; carbohydrate sulfation. Its function is as follows. Catalyzes the transfer of sulfate to beta-1,3-linked galactose residues in O-linked glycoproteins. Good substrates include asialofetuin, Gal-beta-1,3-GalNAc and Gal-beta-1,3 (GlcNAc-beta-1,6)GalNAc. This is Galactose-3-O-sulfotransferase 4 (GAL3ST4) from Bos taurus (Bovine).